A 520-amino-acid chain; its full sequence is Vacuolar protein sorting-associated protein 9A (520 aa).

The VPS9 domain occupies 102–246; the sequence is VIADEKLFQK…ISNIDAKSIS (145 aa). GTP is bound by residues N180 and D185. Disordered regions lie at residues 267–331, 396–433, and 464–520; these read DSQT…AESI, LAPSSSPLQASSGFNTSKESEDHRRSSSDVQMTKETDR, and LVEG…EASE. Polar residues predominate over residues 287–323; sequence LQKTQSLNPKRENTLFQSKSSDSLSGTNELLNINSET. S330 is subject to Phosphoserine. The span at 396–407 shows a compositional bias: low complexity; that stretch reads LAPSSSPLQASS. 2 stretches are compositionally biased toward basic and acidic residues: residues 413–433 and 464–497; these read KESEDHRRSSSDVQMTKETDR and LVEGKDEERDSKVQGEVDAKDIELMKQIPKREGD.

Homodimer. The homodimer interacts with RABF2B. Interacts with RABF1 and RABF2A. Widely expressed.

Functionally, functions as a guanine nucleotide exchange factor (GEF) for Rab small GTPases. Activates specifically RABF1, RABF2A and RABF2B proteins. Required for early stages of embryogenesis, cytokinesis, embryogenesis, and organ development. Is essential for the establishment or maintenance of the polar localization of the auxin efflux carrier PIN1. The protein is Vacuolar protein sorting-associated protein 9A of Arabidopsis thaliana (Mouse-ear cress).